A 370-amino-acid polypeptide reads, in one-letter code: Putative agmatine deiminase (370 aa).

The Amidino-cysteine intermediate role is filled by cysteine 361.

Belongs to the agmatine deiminase family.

The catalysed reaction is agmatine + H2O = N-carbamoylputrescine + NH4(+). The sequence is that of Putative agmatine deiminase from Shewanella baltica (strain OS195).